The sequence spans 249 residues: Aspartate/glutamate leucyltransferase (249 aa).

It belongs to the R-transferase family. Bpt subfamily.

It localises to the cytoplasm. It catalyses the reaction N-terminal L-glutamyl-[protein] + L-leucyl-tRNA(Leu) = N-terminal L-leucyl-L-glutamyl-[protein] + tRNA(Leu) + H(+). The catalysed reaction is N-terminal L-aspartyl-[protein] + L-leucyl-tRNA(Leu) = N-terminal L-leucyl-L-aspartyl-[protein] + tRNA(Leu) + H(+). In terms of biological role, functions in the N-end rule pathway of protein degradation where it conjugates Leu from its aminoacyl-tRNA to the N-termini of proteins containing an N-terminal aspartate or glutamate. In Azorhizobium caulinodans (strain ATCC 43989 / DSM 5975 / JCM 20966 / LMG 6465 / NBRC 14845 / NCIMB 13405 / ORS 571), this protein is Aspartate/glutamate leucyltransferase.